The chain runs to 100 residues: Small ribosomal subunit protein uS14 (100 aa).

Zn(2+)-binding residues include Cys63, Cys66, Cys79, and Cys82.

Belongs to the universal ribosomal protein uS14 family. In terms of assembly, part of the 30S ribosomal subunit. Contacts proteins S3 and S10. The cofactor is Zn(2+).

Its function is as follows. Binds 16S rRNA, required for the assembly of 30S particles and may also be responsible for determining the conformation of the 16S rRNA at the A site. The chain is Small ribosomal subunit protein uS14 (rpsN) from Legionella pneumophila (strain Paris).